Consider the following 460-residue polypeptide: Dynactin subunit 4 (460 aa).

Ala-2 is subject to N-acetylalanine. A coiled-coil region spans residues 152 to 172 (QQLAQKEKVERDRKKLARRRN). The residue at position 196 (Ser-196) is a Phosphoserine. Residue Lys-215 forms a Glycyl lysine isopeptide (Lys-Gly) (interchain with G-Cter in SUMO2) linkage. Thr-407 is modified (phosphothreonine).

It belongs to the dynactin subunit 4 family. As to quaternary structure, subunit of dynactin, a multiprotein complex part of a tripartite complex with dynein and a adapter, such as BICDL1, BICD2 or HOOK3. The dynactin complex is built around ACTR1A/ACTB filament and consists of an actin-related filament composed of a shoulder domain, a pointed end and a barbed end. Its length is defined by its flexible shoulder domain. The soulder is composed of 2 DCTN1 subunits, 4 DCTN2 and 2 DCTN3. The 4 DCNT2 (via N-terminus) bind the ACTR1A filament and act as molecular rulers to determine the length. The pointed end is important for binding dynein-dynactin cargo adapters. Consists of 4 subunits: ACTR10, DCNT4, DCTN5 and DCTN6. The barbed end is composed of a CAPZA1:CAPZB heterodimers, which binds ACTR1A/ACTB filament and dynactin and stabilizes dynactin. Interacts with ATP7B, but not ATP7A, in a copper-dependent manner. Interacts with ANK2; this interaction is required for localization at costameres. Interacts with N4BP2L1.

It is found in the cytoplasm. The protein localises to the cytoskeleton. The protein resides in the microtubule organizing center. It localises to the centrosome. Its subcellular location is the stress fiber. It is found in the cell cortex. The protein localises to the myofibril. The protein resides in the sarcomere. Part of the dynactin complex that activates the molecular motor dynein for ultra-processive transport along microtubules. This Pongo abelii (Sumatran orangutan) protein is Dynactin subunit 4 (DCTN4).